Consider the following 330-residue polypeptide: DNA-directed RNA polymerase subunit alpha (330 aa).

The alpha N-terminal domain (alpha-NTD) stretch occupies residues 1–236 (MQGSVTEFLK…EQLDAFVDLR (236 aa)). The segment at 250–330 (FDPILLRPVD…NWPPASIAED (81 aa)) is alpha C-terminal domain (alpha-CTD).

The protein belongs to the RNA polymerase alpha chain family. In terms of assembly, homodimer. The RNAP catalytic core consists of 2 alpha, 1 beta, 1 beta' and 1 omega subunit. When a sigma factor is associated with the core the holoenzyme is formed, which can initiate transcription.

It catalyses the reaction RNA(n) + a ribonucleoside 5'-triphosphate = RNA(n+1) + diphosphate. Functionally, DNA-dependent RNA polymerase catalyzes the transcription of DNA into RNA using the four ribonucleoside triphosphates as substrates. This Vibrio vulnificus (strain CMCP6) protein is DNA-directed RNA polymerase subunit alpha.